A 633-amino-acid polypeptide reads, in one-letter code: Threonine--tRNA ligase (633 aa).

One can recognise a TGS domain in the interval Met-1 to Gln-59. Positions Asp-240–Pro-532 are catalytic. Cys-332, His-383, and His-509 together coordinate Zn(2+).

Belongs to the class-II aminoacyl-tRNA synthetase family. As to quaternary structure, homodimer. Requires Zn(2+) as cofactor.

It is found in the cytoplasm. The enzyme catalyses tRNA(Thr) + L-threonine + ATP = L-threonyl-tRNA(Thr) + AMP + diphosphate + H(+). Catalyzes the attachment of threonine to tRNA(Thr) in a two-step reaction: L-threonine is first activated by ATP to form Thr-AMP and then transferred to the acceptor end of tRNA(Thr). Also edits incorrectly charged L-seryl-tRNA(Thr). This is Threonine--tRNA ligase from Wolbachia pipientis subsp. Culex pipiens (strain wPip).